The primary structure comprises 121 residues: Large ribosomal subunit protein bL12 (121 aa).

Belongs to the bacterial ribosomal protein bL12 family. In terms of assembly, homodimer. Part of the ribosomal stalk of the 50S ribosomal subunit. Forms a multimeric L10(L12)X complex, where L10 forms an elongated spine to which 2 to 4 L12 dimers bind in a sequential fashion. Binds GTP-bound translation factors.

Forms part of the ribosomal stalk which helps the ribosome interact with GTP-bound translation factors. Is thus essential for accurate translation. The sequence is that of Large ribosomal subunit protein bL12 from Bacillus pumilus (strain SAFR-032).